A 465-amino-acid chain; its full sequence is uncharacterized protein (465 aa).

A helical transmembrane segment spans residues 56 to 76; the sequence is ILYMIIFAIFGLLPFLIALIF. The disordered stretch occupies residues 177–198; it reads KFNKSKKSNKINDKTPILNNNN. Residues 273–293 form a helical membrane-spanning segment; the sequence is LIFLLVSTILLIALIGFILII. The disordered stretch occupies residues 411–449; it reads NNYNNSNNNNNSNNSNSNNNNNNNNNNNNYNNNNYNNNN.

Its subcellular location is the membrane. This is an uncharacterized protein from Dictyostelium discoideum (Social amoeba).